We begin with the raw amino-acid sequence, 277 residues long: Myelin proteolipid protein (277 aa).

Residues 1–10 lie on the Cytoplasmic side of the membrane; it reads MGLLECCARC. S-palmitoyl cysteine attachment occurs at residues Cys-6, Cys-7, and Cys-10. A helical membrane pass occupies residues 11 to 36; the sequence is LVGAPFASLVATGLCFFGVALFCGCG. At 37–59 the chain is on the extracellular side; that stretch reads HEALTGTEKLIETYFSKNYQDYE. The chain crosses the membrane as a helical span at residues 60 to 88; that stretch reads YLINVIHAFQYVIYGTASFFFLYGALLLA. Residues 89-151 are Cytoplasmic-facing; it reads EGFYTTGAVR…LGKWLGHPDK (63 aa). Cys-109 carries S-palmitoyl cysteine lipidation. Ser-114 carries the phosphoserine modification. A phosphothreonine mark is found at Thr-116 and Thr-118. Residues Cys-139 and Cys-141 are each lipidated (S-palmitoyl cysteine). A helical transmembrane segment spans residues 152–178; sequence FVGITYALTVVWLLVFACSAVPVYIYF. Residues 179-238 lie on the Extracellular side of the membrane; the sequence is NTWTTCQSIAFPSKTSASIGTLCADARMYGVLPWNAFPGKVCGSNLLSICKTAEFQMTFH. Intrachain disulfides connect Cys-184–Cys-228 and Cys-201–Cys-220. Thr-199 carries the O-palmitoyl threonine lipid modification. Residues 239 to 268 traverse the membrane as a helical segment; the sequence is LFIAAFVGAAATLVSLLTFMIAATYNFAVL. The Cytoplasmic portion of the chain corresponds to 269-277; sequence KLMGRGTKF.

It belongs to the myelin proteolipid protein family. In terms of assembly, interacts with MAL.

Its subcellular location is the cell membrane. It localises to the myelin membrane. In terms of biological role, this is the major myelin protein from the central nervous system. It plays an important role in the formation or maintenance of the multilamellar structure of myelin. The polypeptide is Myelin proteolipid protein (PLP1) (Oryctolagus cuniculus (Rabbit)).